Here is a 146-residue protein sequence, read N- to C-terminus: Envelope protein OPG155 (146 aa).

The chain crosses the membrane as a helical; Signal-anchor for type II membrane protein span at residues 1–21; sequence MNSLSIFFIVVATAAVCLLFI. At 22–146 the chain is on the virion surface side; the sequence is QGYSIYENYG…AECQFLKSVL (125 aa).

Belongs to the orthopoxvirus OPG155 protein family. In terms of assembly, part of a stable entry-fusion complex (EFC) which is at least composed of proteins OPG143, OPG147, OPG155, OPG086, OPG094, OPG107, OPG104, and OPG099. Formation of the viral membrane is necessary for the assembly of the complex. Interacts directly with protein OPG107. Contains two intramolecular disulfide bonds. They are created by the viral disulfide bond formation pathway, a poxvirus-specific pathway that operates on the cytoplasmic side of the MV membranes.

It is found in the virion membrane. Its function is as follows. Envelope protein required for virus entry into host cell and for cell-cell fusion (syncytium formation). This is Envelope protein OPG155 (OPG155) from Cowpox virus (strain GRI-90 / Grishak) (CPV).